Consider the following 725-residue polypeptide: Antigen peptide transporter 1 (725 aa).

Topologically, residues 1 to 8 are cytoplasmic; it reads MAAHAWPT. A helical transmembrane segment spans residues 9-29; it reads AALLLLLVDWLLLRPVLPGIF. Residues 30–38 lie on the Lumenal side of the membrane; that stretch reads SLLVPEVPL. A helical membrane pass occupies residues 39 to 60; the sequence is LRVWAVGLSRWAILGLGVRGVL. Over 61 to 67 the chain is Cytoplasmic; sequence GVTAGAR. The helical transmembrane segment at 68-88 threads the bilayer; it reads GWLAALQPLVAALGLALPGLA. Residues 89-110 are Lumenal-facing; sequence SFRKLSAWGALREGDNAGLLHW. A helical membrane pass occupies residues 111-131; the sequence is NSRLDAFVLSYVAALPAAALW. Residues 132–163 are Cytoplasmic-facing; that stretch reads HKLGGFWAPSGHKGAGDMLCRMLGFLDSKKGR. A helical transmembrane segment spans residues 164–184; that stretch reads LHLVLVLLILSCLGEMAIPFF. In terms of domain architecture, ABC transmembrane type-1 spans 164-447; that stretch reads LHLVLVLLIL…LLSIYPSMQK (284 aa). Residues 185–204 lie on the Lumenal side of the membrane; that stretch reads TGRITDWILQDKTAPSFARN. The helical transmembrane segment at 205-225 threads the bilayer; the sequence is MWLMCILTIASTVLEFAGDGI. Topologically, residues 226–275 are cytoplasmic; that stretch reads YNITMGHMHSRVHGEVFRAVLHQETGFFLKNPTGSITSRVTEDTSNVCES. A helical transmembrane segment spans residues 276–296; it reads ISDKLNLFLWYLGRGLCLLAF. Over 297–305 the chain is Lumenal; the sequence is MIWGSFYLT. A helical membrane pass occupies residues 306-326; sequence VVTLLSLPLLFLLPRRLGKVY. Residues 327 to 395 are Cytoplasmic-facing; the sequence is QSLAVKVQES…VTEVWTMSVS (69 aa). The part of the peptide-binding site stretch occupies residues 352-397; that stretch reads PTVRSFANEEGEAQKFRQKLEEMKPLNKKEALAYVTEVWTMSVSGM. The chain crosses the membrane as a helical span at residues 396-416; that stretch reads GMLLKVGILYLGGQLVVRGAV. At 417 to 420 the chain is on the lumenal side; that stretch reads SSGN. A helical transmembrane segment spans residues 421 to 441; sequence LVSFVLYQLQFTRAVEVLLSI. Positions 430-464 are part of the peptide-binding site; sequence QFTRAVEVLLSIYPSMQKSVGASEKIFEYLDRTPC. The Cytoplasmic portion of the chain corresponds to 442–725; the sequence is YPSMQKSVGA…MVEALAAPSD (284 aa). One can recognise an ABC transporter domain in the interval 480-719; that stretch reads VKFQDVSFAY…GGCYRSMVEA (240 aa). ATP contacts are provided by residues 515–523, 618–624, and Gln-678; these read GPNGSGKST and NQLSGGQ. Ser-522 contacts Mg(2+).

This sequence belongs to the ABC transporter superfamily. ABCB family. MHC peptide exporter (TC 3.A.1.209) subfamily. As to quaternary structure, heterodimer of TAP1 and TAP2 (TAP1-TAP2). A component of the peptide loading complex (PLC), interacts via TAPBP with MHCI heterodimer; this interaction mediates peptide-MHCI assembly. Interacts with PSMB5 and PSMB8. The cofactor is Mg(2+).

Its subcellular location is the endoplasmic reticulum membrane. The enzyme catalyses a peptide antigen(in) + ATP + H2O = a peptide antigen(out) + ADP + phosphate + H(+). Functionally, ABC transporter associated with antigen processing. In complex with TAP2 mediates unidirectional translocation of peptide antigens from cytosol to endoplasmic reticulum (ER) for loading onto MHC class I (MHCI) molecules. Uses the chemical energy of ATP to export peptides against the concentration gradient. During the transport cycle alternates between 'inward-facing' state with peptide binding site facing the cytosol to 'outward-facing' state with peptide binding site facing the ER lumen. Peptide antigen binding to ATP-loaded TAP1-TAP2 induces a switch to hydrolysis-competent 'outward-facing' conformation ready for peptide loading onto nascent MHCI molecules. Subsequently ATP hydrolysis resets the transporter to the 'inward facing' state for a new cycle. As a component of the peptide loading complex (PLC), acts as a molecular scaffold essential for peptide-MHCI assembly and antigen presentation. The sequence is that of Antigen peptide transporter 1 (Tap1) from Rattus norvegicus (Rat).